The sequence spans 369 residues: Probable dual-specificity RNA methyltransferase RlmN (369 aa).

The active-site Proton acceptor is the Glu108. Residues Tyr114–Arg351 enclose the Radical SAM core domain. A disulfide bond links Cys121 and Cys362. [4Fe-4S] cluster is bound by residues Cys128, Cys132, and Cys135. S-adenosyl-L-methionine-binding positions include Gly183–Glu184, Ser217, Ser240–His242, and Asn319. Cys362 (S-methylcysteine intermediate) is an active-site residue.

The protein belongs to the radical SAM superfamily. RlmN family. The cofactor is [4Fe-4S] cluster.

It localises to the cytoplasm. It carries out the reaction adenosine(2503) in 23S rRNA + 2 reduced [2Fe-2S]-[ferredoxin] + 2 S-adenosyl-L-methionine = 2-methyladenosine(2503) in 23S rRNA + 5'-deoxyadenosine + L-methionine + 2 oxidized [2Fe-2S]-[ferredoxin] + S-adenosyl-L-homocysteine. The enzyme catalyses adenosine(37) in tRNA + 2 reduced [2Fe-2S]-[ferredoxin] + 2 S-adenosyl-L-methionine = 2-methyladenosine(37) in tRNA + 5'-deoxyadenosine + L-methionine + 2 oxidized [2Fe-2S]-[ferredoxin] + S-adenosyl-L-homocysteine. In terms of biological role, specifically methylates position 2 of adenine 2503 in 23S rRNA and position 2 of adenine 37 in tRNAs. This chain is Probable dual-specificity RNA methyltransferase RlmN, found in Rhodococcus erythropolis (strain PR4 / NBRC 100887).